Here is a 172-residue protein sequence, read N- to C-terminus: Protein-export protein SecB (172 aa).

Belongs to the SecB family. Homotetramer, a dimer of dimers. One homotetramer interacts with 1 SecA dimer.

It localises to the cytoplasm. Functionally, one of the proteins required for the normal export of preproteins out of the cell cytoplasm. It is a molecular chaperone that binds to a subset of precursor proteins, maintaining them in a translocation-competent state. It also specifically binds to its receptor SecA. This Haemophilus ducreyi (strain 35000HP / ATCC 700724) protein is Protein-export protein SecB.